Consider the following 474-residue polypeptide: L-arabinose isomerase (474 aa).

Mn(2+)-binding residues include Glu-306, Glu-331, His-348, and His-447.

The protein belongs to the arabinose isomerase family. Requires Mn(2+) as cofactor.

It catalyses the reaction beta-L-arabinopyranose = L-ribulose. It functions in the pathway carbohydrate degradation; L-arabinose degradation via L-ribulose; D-xylulose 5-phosphate from L-arabinose (bacterial route): step 1/3. In terms of biological role, catalyzes the conversion of L-arabinose to L-ribulose. This is L-arabinose isomerase from Lactiplantibacillus plantarum (strain ATCC BAA-793 / NCIMB 8826 / WCFS1) (Lactobacillus plantarum).